We begin with the raw amino-acid sequence, 160 residues long: MSDEEHHFESKADAGASKTYPQQAGTIRKNGYIVIKGRPCKVVEVSTSKTGKHGHAKCHFVAIDIFNAKKLEDIVPSSHNCDVPHVNRTDYQLIDISEDGFVSLLTENGNTKDDLRLPTDDTLLNQVKGGFEEGKDLVLSVMSAMGEEQICAVKDIGTKT.

The span at 1-12 (MSDEEHHFESKA) shows a compositional bias: basic and acidic residues. Residues 1 to 21 (MSDEEHHFESKADAGASKTYP) form a disordered region. Lys-52 is subject to Hypusine.

It belongs to the eIF-5A family. In terms of processing, lys-52 undergoes hypusination, a unique post-translational modification that consists in the addition of a butylamino group from spermidine to lysine side chain, leading to the formation of the unusual amino acid hypusine. eIF-5As are the only known proteins to undergo this modification, which is essential for their function.

Translation factor that promotes translation elongation and termination, particularly upon ribosome stalling at specific amino acid sequence contexts. Binds between the exit (E) and peptidyl (P) site of the ribosome and promotes rescue of stalled ribosome: specifically required for efficient translation of polyproline-containing peptides as well as other motifs that stall the ribosome. Acts as a ribosome quality control (RQC) cofactor by joining the RQC complex to facilitate peptidyl transfer during CAT tailing step. This Solanum lycopersicum (Tomato) protein is Eukaryotic translation initiation factor 5A-4.